The sequence spans 39 residues: Cytochrome b559 subunit beta (39 aa).

The chain crosses the membrane as a helical span at residues 14–30 (WLAVHGLAVPTVFFLGS). Residue His18 participates in heme binding.

Belongs to the PsbE/PsbF family. In terms of assembly, heterodimer of an alpha subunit and a beta subunit. PSII is composed of 1 copy each of membrane proteins PsbA, PsbB, PsbC, PsbD, PsbE, PsbF, PsbH, PsbI, PsbJ, PsbK, PsbL, PsbM, PsbT, PsbX, PsbY, PsbZ, Psb30/Ycf12, at least 3 peripheral proteins of the oxygen-evolving complex and a large number of cofactors. It forms dimeric complexes. Requires heme b as cofactor.

It localises to the plastid. The protein resides in the chloroplast thylakoid membrane. This b-type cytochrome is tightly associated with the reaction center of photosystem II (PSII). PSII is a light-driven water:plastoquinone oxidoreductase that uses light energy to abstract electrons from H(2)O, generating O(2) and a proton gradient subsequently used for ATP formation. It consists of a core antenna complex that captures photons, and an electron transfer chain that converts photonic excitation into a charge separation. The sequence is that of Cytochrome b559 subunit beta from Welwitschia mirabilis (Tree tumbo).